Here is a 628-residue protein sequence, read N- to C-terminus: Putative serine esterase Mb1866c (628 aa).

The active-site Acyl-ester intermediate is the Ser156. Residues Asp322 and His350 each act as charge relay system in the active site.

It belongs to the CocE/NonD hydrolase family.

In Mycobacterium bovis (strain ATCC BAA-935 / AF2122/97), this protein is Putative serine esterase Mb1866c.